We begin with the raw amino-acid sequence, 348 residues long: Outer membrane protein assembly factor BamC (348 aa).

An N-terminal signal peptide occupies residues 1–24; that stretch reads MATLLQTSKVMKVAGLSLVVFLAA. C25 carries N-palmitoyl cysteine lipidation. C25 carries the S-diacylglycerol cysteine lipid modification. The interval 211-230 is disordered; sequence SQQQEEAGQNNAKDSGALTV.

The protein belongs to the BamC family. As to quaternary structure, part of the Bam complex, which is composed of the outer membrane protein BamA, and four lipoproteins BamB, BamC, BamD and BamE.

The protein localises to the cell outer membrane. Functionally, part of the outer membrane protein assembly complex, which is involved in assembly and insertion of beta-barrel proteins into the outer membrane. In Xenorhabdus nematophila (strain ATCC 19061 / DSM 3370 / CCUG 14189 / LMG 1036 / NCIMB 9965 / AN6), this protein is Outer membrane protein assembly factor BamC.